Here is a 166-residue protein sequence, read N- to C-terminus: MTESTSRRPAYARLLDRAVRILAVRDHSEQELRRKLAAPIMGKNGPEEIDATAEDYERVIAWCHEHGYLDDSRFVARFIASRSRKGYGPARIRQELNQKGISREATEKAMRECDIDWCALARDQATRKYGEPLPTVFSEKVKIQRFLLYRGYLMEDIQDIWRNFAD.

The protein belongs to the RecX family.

It localises to the cytoplasm. Modulates RecA activity. This is Regulatory protein RecX from Escherichia coli O139:H28 (strain E24377A / ETEC).